The primary structure comprises 107 residues: DNA-directed RNA polymerase subunit omega (107 aa).

Positions 81–107 (MEEEAAKGNADAGQGEGDAPKTPGQDG) are disordered.

It belongs to the RNA polymerase subunit omega family. The RNAP catalytic core consists of 2 alpha, 1 beta, 1 beta' and 1 omega subunit. When a sigma factor is associated with the core the holoenzyme is formed, which can initiate transcription.

The enzyme catalyses RNA(n) + a ribonucleoside 5'-triphosphate = RNA(n+1) + diphosphate. Its function is as follows. Promotes RNA polymerase assembly. Latches the N- and C-terminal regions of the beta' subunit thereby facilitating its interaction with the beta and alpha subunits. This Alkalilimnicola ehrlichii (strain ATCC BAA-1101 / DSM 17681 / MLHE-1) protein is DNA-directed RNA polymerase subunit omega.